The sequence spans 355 residues: Histidine biosynthesis bifunctional protein HisB (355 aa).

The tract at residues 1–166 (MKQKILFIDR…DITKEIIKRN (166 aa)) is histidinol-phosphatase. Aspartate 9 serves as the catalytic Nucleophile. Mg(2+) contacts are provided by aspartate 9 and aspartate 11. Residue aspartate 11 is the Proton donor of the active site. Zn(2+) contacts are provided by cysteine 93, histidine 95, cysteine 101, and cysteine 103. Aspartate 130 provides a ligand contact to Mg(2+). Positions 167–355 (RYREVIRETK…NTLPTSKGIL (189 aa)) are imidazoleglycerol-phosphate dehydratase.

The protein in the N-terminal section; belongs to the histidinol-phosphatase family. This sequence in the C-terminal section; belongs to the imidazoleglycerol-phosphate dehydratase family. Mg(2+) serves as cofactor. The cofactor is Zn(2+).

It is found in the cytoplasm. The enzyme catalyses D-erythro-1-(imidazol-4-yl)glycerol 3-phosphate = 3-(imidazol-4-yl)-2-oxopropyl phosphate + H2O. It catalyses the reaction L-histidinol phosphate + H2O = L-histidinol + phosphate. Its pathway is amino-acid biosynthesis; L-histidine biosynthesis; L-histidine from 5-phospho-alpha-D-ribose 1-diphosphate: step 6/9. It participates in amino-acid biosynthesis; L-histidine biosynthesis; L-histidine from 5-phospho-alpha-D-ribose 1-diphosphate: step 8/9. The protein is Histidine biosynthesis bifunctional protein HisB of Buchnera aphidicola subsp. Schizaphis graminum (strain Sg).